The sequence spans 406 residues: 2,3-bisphosphoglycerate-independent phosphoglycerate mutase (406 aa).

Belongs to the BPG-independent phosphoglycerate mutase family. A-PGAM subfamily.

It carries out the reaction (2R)-2-phosphoglycerate = (2R)-3-phosphoglycerate. It functions in the pathway carbohydrate degradation; glycolysis; pyruvate from D-glyceraldehyde 3-phosphate: step 3/5. Catalyzes the interconversion of 2-phosphoglycerate and 3-phosphoglycerate. In Methanococcus maripaludis (strain C6 / ATCC BAA-1332), this protein is 2,3-bisphosphoglycerate-independent phosphoglycerate mutase.